We begin with the raw amino-acid sequence, 317 residues long: Gamma-glutamyl hydrolase (317 aa).

The signal sequence occupies residues 1 to 24 (MANLGYLLCLLGLLLCGLSSPGMS). The Gamma-glutamyl hydrolase domain occupies 25–317 (RPYNHGSERP…SSFQQAYMFD (293 aa)). N-linked (GlcNAc...) (high mannose) asparagine glycosylation occurs at N100. The active-site Nucleophile is the C133. N-linked (GlcNAc...) (high mannose) asparagine glycosylation is found at N162 and N188. The N-linked (GlcNAc...) asparagine glycan is linked to N202. H243 functions as the Proton donor in the catalytic mechanism. The N-linked (GlcNAc...) asparagine glycan is linked to N306.

This sequence belongs to the peptidase C26 family. In terms of assembly, homodimer. In terms of tissue distribution, isoform I (more expressed than isoform II in all tissues) is highly expressed in salivary gland, followed by kidney, liver, lung, stomach and uterus, and weakly expressed in small intestine, brain and fetal liver. Also expressed at a lower level in thymus, spleen and skeletal muscle. Also expressed in tumors.

Its subcellular location is the secreted. The protein resides in the extracellular space. The protein localises to the lysosome. It localises to the melanosome. The enzyme catalyses (6S)-5,6,7,8-tetrahydrofolyl-(gamma-L-Glu)(n) + (n-1) H2O = (6S)-5,6,7,8-tetrahydrofolate + (n-1) L-glutamate. Functionally, hydrolyzes the polyglutamate sidechains of pteroylpolyglutamates. Progressively removes gamma-glutamyl residues from pteroylpoly-gamma-glutamate to yield pteroyl-alpha-glutamate (folic acid) and free glutamate. May play an important role in the bioavailability of dietary pteroylpolyglutamates and in the metabolism of pteroylpolyglutamates and antifolates. The protein is Gamma-glutamyl hydrolase (Ggh) of Mus musculus (Mouse).